The sequence spans 1069 residues: Kinesin-like protein vab-8 (1069 aa).

Positions 15 to 325 constitute a Kinesin motor domain; sequence PLRTIPKLRL…ACKIARTRVK (311 aa). Disordered regions lie at residues 328–374, 391–436, and 572–598; these read MGHG…LESG, SRTT…KSSP, and EQEE…RILS. Interaction with unc-51 regions lie at residues 331 to 517 and 517 to 719; these read GRKP…KSKY and YNLD…TVVD. Composition is skewed to low complexity over residues 339–364 and 391–407; these read SSGT…GTPR and SRTT…TPTS. The interval 403-877 is interaction with unc-73; sequence STPTSIRPLH…SAERDRKTSK (475 aa). A coiled-coil region spans residues 719-769; it reads DWSQIERKKEREKDAMEEEKRKEVLRERRAKLKITELEIKRERNMIDKELD. The tract at residues 786-960 is disordered; sequence SLSPCRGGRT…RQSYSASSGY (175 aa). Low complexity predominate over residues 824–847; sequence GGSLAKLSASGASGSGPPSSPSLG. Basic and acidic residues predominate over residues 883-897; sequence SSKERRSSGSKEELQ. Residues 906–928 are compositionally biased toward low complexity; it reads TSPKTYGGPGTSSSGRGSSAPGS. Over residues 938–960 the composition is skewed to polar residues; that stretch reads TEKTANGTMPRSKRQSYSASSGY. Residues 990-1027 adopt a coiled-coil conformation; sequence LVRQADEIRHRQWQLKKELEEAKRAIGQEEDAKMIANS.

This sequence belongs to the TRAFAC class myosin-kinesin ATPase superfamily. Kinesin family. KIF26 subfamily. As to quaternary structure, interacts with unc-51 and unc-73. Phosphorylated by unc-51.

It localises to the cytoplasm. The protein localises to the cytoskeleton. Its function is as follows. Required for posterior migration of cells and axon growth cones during nervous system assembly. In PLM neuron, regulates innexin unc-9 gap junction turnover by suppressing unc-9 transport out of the gap junctions. This Caenorhabditis briggsae protein is Kinesin-like protein vab-8 (vab-8).